A 967-amino-acid chain; its full sequence is RNA polymerase II C-terminal domain phosphatase-like 1 (967 aa).

Positions 38–41 (RKKK) match the Nuclear localization signal (NLS) motif. The FCP1 homology domain occupies 151-401 (LNLRCLGIVF…TPVLCVARNV (251 aa)). 2 disordered regions span residues 548–611 (SEPS…VQSR) and 643–712 (MEKH…RNSD). Over residues 590–603 (PSEPSFPQRPPVQA) the composition is skewed to pro residues. The segment covering 665–684 (RMLHENRRPPKESLRRDEQL) has biased composition (basic and acidic residues). DRBM domains are found at residues 724–792 (TETS…NLAD) and 855–925 (GSIT…SVRS). The tract at residues 928-967 (GQPLHKRQGSPRSFGGMSNKRLKPDFQRSLQRMPSSGRYS) is disordered. The required for nuclear localization (NLS) stretch occupies residues 945–967 (SNKRLKPDFQRSLQRMPSSGRYS). A Nuclear localization signal (NLS) motif is present at residues 947–951 (KRLKP). Positions 955 to 967 (RSLQRMPSSGRYS) are enriched in polar residues.

In terms of assembly, interacts with FREE1, ANAC019, MYB3, MYB4 and MYB32. Binds to DMS3. Interacts with RCF3. Interacts with RS40 and RS41. Interacts with EIF4A3. Interacts with UPF3. Requires Mg(2+) as cofactor. Co(2+) is required as a cofactor. It depends on Mn(2+) as a cofactor. As to expression, expressed at very low levels in roots, leaves, stems, flowers and siliques.

It localises to the nucleus. The protein localises to the nucleus speckle. It carries out the reaction O-phospho-L-seryl-[protein] + H2O = L-seryl-[protein] + phosphate. It catalyses the reaction O-phospho-L-threonyl-[protein] + H2O = L-threonyl-[protein] + phosphate. Functionally, processively dephosphorylates 'Ser-5' but not 'Ser-2' of the heptad repeats YSPTSPS in the C-terminal domain of the largest RNA polymerase II subunit (RPB1). This promotes the activity of RNA polymerase II. Together with CPL2, required for male gametes fertility. Multifunctional regulator that modulates plant growth, stress, and phytohormones responses. Negative regulator of stress gene transcription involved in abscisic acid (ABA) mediated and jasmonic acid (JA) mediated signaling pathways, NaCl, osmotic stress, wounding, and cold resistance. Negatively regulates the expression of jasmonic acid (JA) biosynthetic genes in response to wounding. Forms a complex with RCF3 that modulates co-transcriptional processes such as mRNA capping and polyadenylation, and functions to repress stress-inducible gene expression. Dephosphorylates RCF3. Involved in the dephosphorylation of EIF4A3. This dephosphorylation retains EIF4A3 in the nucleus and limits its accumulation in the cytoplasm. Is essential for the degradation of the nonsense-mediated mRNA decay (NMD) transcripts. This chain is RNA polymerase II C-terminal domain phosphatase-like 1, found in Arabidopsis thaliana (Mouse-ear cress).